The sequence spans 325 residues: tRNA(Ile)-lysidine synthase (325 aa).

35 to 40 (SGGQDS) contacts ATP.

This sequence belongs to the tRNA(Ile)-lysidine synthase family.

The protein resides in the cytoplasm. The enzyme catalyses cytidine(34) in tRNA(Ile2) + L-lysine + ATP = lysidine(34) in tRNA(Ile2) + AMP + diphosphate + H(+). In terms of biological role, ligates lysine onto the cytidine present at position 34 of the AUA codon-specific tRNA(Ile) that contains the anticodon CAU, in an ATP-dependent manner. Cytidine is converted to lysidine, thus changing the amino acid specificity of the tRNA from methionine to isoleucine. This Gloeobacter violaceus (strain ATCC 29082 / PCC 7421) protein is tRNA(Ile)-lysidine synthase.